The following is a 209-amino-acid chain: Ribosomal RNA large subunit methyltransferase E (209 aa).

Positions 63, 65, 83, 99, and 124 each coordinate S-adenosyl-L-methionine. The Proton acceptor role is filled by Lys164.

It belongs to the class I-like SAM-binding methyltransferase superfamily. RNA methyltransferase RlmE family.

The protein localises to the cytoplasm. The enzyme catalyses uridine(2552) in 23S rRNA + S-adenosyl-L-methionine = 2'-O-methyluridine(2552) in 23S rRNA + S-adenosyl-L-homocysteine + H(+). Its function is as follows. Specifically methylates the uridine in position 2552 of 23S rRNA at the 2'-O position of the ribose in the fully assembled 50S ribosomal subunit. This chain is Ribosomal RNA large subunit methyltransferase E, found in Photorhabdus laumondii subsp. laumondii (strain DSM 15139 / CIP 105565 / TT01) (Photorhabdus luminescens subsp. laumondii).